A 757-amino-acid polypeptide reads, in one-letter code: MDVNPTLLFLKVPAQNAISTTFPYTGDPPYSHGTGTGYTMDTVNRTHQYSEKGKWTTNTETGAPQLNPIDGPLPEDNEPSGYAQTDCVLEAMAFLEESHPGIFENSCLETMEIVQQTRVDKLTQGRQTYDWTLNRNQPAATALANTIEVFRSNGLTANESGRLIDSLKDVMESMDKEEMEITTHFQRKRRVRDNMTKKMVTQRTIGKKKQRLNKRSYLIRALTLNTMTKDAERGKLKRRAIATPGMQIRGFVYFVETLARSICEKLEQSGLPVGGNEKKAKLANVVRKMMTNSQDTELSFTITGDNTKWNENQNPRMFLAMITYITRNQPEWFRNVLSIAPIMFSNKMARLGKGYMFESKSMKLRTQIPAEMLASIDLKYFNESTRKKIERIRPLLIDGTASLSPGMMMGMFNMLSTVLGVSILNLGQKRYTKTTYWWDGLQSSDDFALIVNAPNHEGIQAGVDRFYRTCKLVGINMSKKKSYINRTGTFEFTSFFYRYGFVANFSMELPSFGVSGINESADMSIGVTVIKNNMINNDLGPATAQMALQLFIKDYRYTYRCHRGDTQIQTRRSFELKKLWEQTRSKAGLLVSDGGPNLYNIRNLHIPEVCLKWELMDEDYQGRLCNPLNPFVSHKEIESVNNAVVMPAHGPAKSMEYDAVATTHSWIPKRNRSILNTSQRGILEDEQMYQKCCNLFEKFFPSSSYRRPVGISSMVEAMVSRARIDARIDFESGRIKKEEFAEIMKICSTIEELRRQK.

Positions 50–82 are disordered; that stretch reads SEKGKWTTNTETGAPQLNPIDGPLPEDNEPSGY. Positions 55 to 64 are enriched in polar residues; it reads WTTNTETGAP. 2 short sequence motifs (nuclear localization signal) span residues 187 to 195 and 203 to 216; these read RKRRVRDNM and RTIGKKKQRLNKRS. The tract at residues 249–256 is promoter-binding site; the sequence is RGFVYFVE. The RdRp catalytic domain maps to 286 to 483; it reads VRKMMTNSQD…GINMSKKKSY (198 aa).

This sequence belongs to the influenza viruses polymerase PB1 family. As to quaternary structure, influenza RNA polymerase is composed of three subunits: PB1, PB2 and PA. Interacts (via N-terminus) with PA (via C-terminus). Interacts (via C-terminus) with PB2 (via N-terminus); this interaction is essential for transcription initiation. In terms of processing, phosphorylated by host PRKCA.

The protein localises to the host nucleus. Its subcellular location is the host cytoplasm. It catalyses the reaction RNA(n) + a ribonucleoside 5'-triphosphate = RNA(n+1) + diphosphate. Functionally, RNA-dependent RNA polymerase which is responsible for replication and transcription of virus RNA segments. The transcription of viral mRNAs occurs by a unique mechanism called cap-snatching. 5' methylated caps of cellular mRNAs are cleaved after 10-13 nucleotides by PA. In turn, these short capped RNAs are used as primers by PB1 for transcription of viral mRNAs. During virus replication, PB1 initiates RNA synthesis and copy vRNA into complementary RNA (cRNA) which in turn serves as a template for the production of more vRNAs. In Aves, this protein is RNA-directed RNA polymerase catalytic subunit.